The primary structure comprises 265 residues: Ribosomal RNA small subunit methyltransferase A (265 aa).

Positions 11, 13, 38, 59, 83, and 100 each coordinate S-adenosyl-L-methionine.

Belongs to the class I-like SAM-binding methyltransferase superfamily. rRNA adenine N(6)-methyltransferase family. RsmA subfamily.

It is found in the cytoplasm. It carries out the reaction adenosine(1518)/adenosine(1519) in 16S rRNA + 4 S-adenosyl-L-methionine = N(6)-dimethyladenosine(1518)/N(6)-dimethyladenosine(1519) in 16S rRNA + 4 S-adenosyl-L-homocysteine + 4 H(+). Its function is as follows. Specifically dimethylates two adjacent adenosines (A1518 and A1519) in the loop of a conserved hairpin near the 3'-end of 16S rRNA in the 30S particle. May play a critical role in biogenesis of 30S subunits. The chain is Ribosomal RNA small subunit methyltransferase A from Thermosynechococcus vestitus (strain NIES-2133 / IAM M-273 / BP-1).